Reading from the N-terminus, the 304-residue chain is Sulfate adenylyltransferase subunit 2 1 (304 aa).

Belongs to the PAPS reductase family. CysD subfamily. Heterodimer composed of CysD, the smaller subunit, and CysN.

The enzyme catalyses sulfate + ATP + H(+) = adenosine 5'-phosphosulfate + diphosphate. The protein operates within sulfur metabolism; hydrogen sulfide biosynthesis; sulfite from sulfate: step 1/3. Functionally, with CysN forms the ATP sulfurylase (ATPS) that catalyzes the adenylation of sulfate producing adenosine 5'-phosphosulfate (APS) and diphosphate, the first enzymatic step in sulfur assimilation pathway. APS synthesis involves the formation of a high-energy phosphoric-sulfuric acid anhydride bond driven by GTP hydrolysis by CysN coupled to ATP hydrolysis by CysD. In Marinobacter nauticus (strain ATCC 700491 / DSM 11845 / VT8) (Marinobacter aquaeolei), this protein is Sulfate adenylyltransferase subunit 2 1.